The chain runs to 166 residues: MMEEYVVIGKVLDTFGLEGELKVRPYAPPEVFENLEKVYLKRKGGDWVPFEVEWVDFIDDKVIIKFKGYDSIDEVEQFKGAKLFLPKEELPELGEEEYYAYELVGMEVETDKGKKLGKVERVQDMGPYDALVLDKENLLVPFVSDIVLKVDKENKKIIVKEELLPV.

The 70-residue stretch at 95 to 164 folds into the PRC barrel domain; it reads EEEYYAYELV…KKIIVKEELL (70 aa).

The protein belongs to the RimM family. As to quaternary structure, binds ribosomal protein uS19.

Its subcellular location is the cytoplasm. An accessory protein needed during the final step in the assembly of 30S ribosomal subunit, possibly for assembly of the head region. Essential for efficient processing of 16S rRNA. May be needed both before and after RbfA during the maturation of 16S rRNA. It has affinity for free ribosomal 30S subunits but not for 70S ribosomes. The sequence is that of Ribosome maturation factor RimM from Aquifex aeolicus (strain VF5).